The primary structure comprises 235 residues: RNA-free ribonuclease P (235 aa).

It belongs to the HARP family.

The catalysed reaction is Endonucleolytic cleavage of RNA, removing 5'-extranucleotides from tRNA precursor.. Its function is as follows. RNA-free RNase P that catalyzes the removal of the 5'-leader sequence from pre-tRNA to produce the mature 5'-terminus. In Methanothrix thermoacetophila (strain DSM 6194 / JCM 14653 / NBRC 101360 / PT) (Methanosaeta thermophila), this protein is RNA-free ribonuclease P.